The chain runs to 500 residues: Lysine--tRNA ligase (500 aa).

Residues Glu-410 and Glu-417 each contribute to the Mg(2+) site.

Belongs to the class-II aminoacyl-tRNA synthetase family. Homodimer. The cofactor is Mg(2+).

The protein localises to the cytoplasm. It carries out the reaction tRNA(Lys) + L-lysine + ATP = L-lysyl-tRNA(Lys) + AMP + diphosphate. In Shewanella denitrificans (strain OS217 / ATCC BAA-1090 / DSM 15013), this protein is Lysine--tRNA ligase.